We begin with the raw amino-acid sequence, 379 residues long: Programmed cell death protein 2-like (379 aa).

This chain is Programmed cell death protein 2-like (PDCD2L), found in Gallus gallus (Chicken).